The primary structure comprises 147 residues: Protein PBDC1 homolog (147 aa).

The protein belongs to the PBDC1 family.

It localises to the cytoplasm. It is found in the nucleus. The polypeptide is Protein PBDC1 homolog (Schizosaccharomyces pombe (strain 972 / ATCC 24843) (Fission yeast)).